Consider the following 228-residue polypeptide: 2,3-bisphosphoglycerate-dependent phosphoglycerate mutase (228 aa).

Substrate is bound by residues 8-15 (RHGQSQWN), 21-22 (TG), Arg-60, 87-90 (ERHY), Lys-98, 114-115 (RR), and 180-181 (GN). Catalysis depends on His-9, which acts as the Tele-phosphohistidine intermediate. Glu-87 (proton donor/acceptor) is an active-site residue.

The protein belongs to the phosphoglycerate mutase family. BPG-dependent PGAM subfamily. In terms of assembly, homodimer.

It carries out the reaction (2R)-2-phosphoglycerate = (2R)-3-phosphoglycerate. Its pathway is carbohydrate degradation; glycolysis; pyruvate from D-glyceraldehyde 3-phosphate: step 3/5. Catalyzes the interconversion of 2-phosphoglycerate and 3-phosphoglycerate. The protein is 2,3-bisphosphoglycerate-dependent phosphoglycerate mutase of Erythrobacter litoralis (strain HTCC2594).